The following is a 376-amino-acid chain: Pregnancy-associated glycoprotein 2 (376 aa).

A signal peptide spans 1–15 (MKWLVLLGLVALSEC). 2 N-linked (GlcNAc...) asparagine glycosylation sites follow: Asn51 and Asn71. One can recognise a Peptidase A1 domain in the interval 68-373 (YVGNITIGTP…DRKNRRIGLA (306 aa)). Residue Asp86 is part of the active site. Cys99 and Cys104 are joined by a disulfide. N-linked (GlcNAc...) asparagine glycans are attached at residues Asn114, Asn248, and Asn252. Cys258 and Cys262 form a disulfide bridge. Asp267 is a catalytic residue. A disulfide bridge connects residues Cys300 and Cys333. Residue Asn343 is glycosylated (N-linked (GlcNAc...) asparagine).

Belongs to the peptidase A1 family. In terms of processing, N-Glycosylated; the glycans terminate in either N-acetyl-galactosamine (GalNAc) or N-acetyllactosamine. Terminal GalNAc on Asn-linked glycans is greatly reduced prior to parturition while lactosamine-type N-glycans remain unaltered. As to expression, trophoblast and placental tissue. Localized to both the mononucleate and binucleate cells of the trophectoderm.

The protein localises to the secreted. The protein resides in the extracellular space. Its function is as follows. PAG2 or a processed derivative of this molecule might represent a factor that binds the LH receptor. This is Pregnancy-associated glycoprotein 2 (PAG2) from Bos taurus (Bovine).